Consider the following 179-residue polypeptide: Transcription factor BOA15 (179 aa).

The protein localises to the nucleus. Transcription factor that probably coregulates the gene clusters that mediates the biosynthesis of botcinin acid and its botcinin derivatives, acetate-derived polyketides that contribute to virulence when combined with the sesquiterpene botrydial. Botcinin acid and its derivatives have been shown to induce chlorosis and necrosis during host plant infection, but also have antifungal activities. The chain is Transcription factor BOA15 from Botryotinia fuckeliana (strain B05.10) (Noble rot fungus).